The primary structure comprises 83 residues: METVLGMTAIAVALLIGMGALGTAIGFGLLGGKFLEGAARQPEMAPMLQVKMFIVAGLLDAVTMIGVGIALFMLFTNPLGAML.

Transmembrane regions (helical) follow at residues 10–30 (IAVALLIGMGALGTAIGFGLL) and 52–72 (MFIVAGLLDAVTMIGVGIALF).

Belongs to the ATPase C chain family. As to quaternary structure, F-type ATPases have 2 components, F(1) - the catalytic core - and F(0) - the membrane proton channel. F(1) has five subunits: alpha(3), beta(3), gamma(1), delta(1), epsilon(1). F(0) has three main subunits: a(1), b(2) and c(10-14). The alpha and beta chains form an alternating ring which encloses part of the gamma chain. F(1) is attached to F(0) by a central stalk formed by the gamma and epsilon chains, while a peripheral stalk is formed by the delta and b chains.

The protein resides in the cell inner membrane. Its function is as follows. F(1)F(0) ATP synthase produces ATP from ADP in the presence of a proton or sodium gradient. F-type ATPases consist of two structural domains, F(1) containing the extramembraneous catalytic core and F(0) containing the membrane proton channel, linked together by a central stalk and a peripheral stalk. During catalysis, ATP synthesis in the catalytic domain of F(1) is coupled via a rotary mechanism of the central stalk subunits to proton translocation. In terms of biological role, key component of the F(0) channel; it plays a direct role in translocation across the membrane. A homomeric c-ring of between 10-14 subunits forms the central stalk rotor element with the F(1) delta and epsilon subunits. In Shewanella loihica (strain ATCC BAA-1088 / PV-4), this protein is ATP synthase subunit c.